We begin with the raw amino-acid sequence, 2156 residues long: MAM and LDL-receptor class A domain-containing protein 1 (2156 aa).

Residues 1–31 (MLFFLDRMLAFPMNETFCCLWIACVFNSTLA) form the signal peptide. Topologically, residues 32–2076 (QQGTESFQCD…FTYAQNNTWT (2045 aa)) are vesicular. The 36-residue stretch at 33–68 (QGTESFQCDNGVSLPPDSICDFTDQCGDSSDERHCL) folds into the LDL-receptor class A 1 domain. Intrachain disulfides connect Cys40–Cys58 and Cys52–Cys67. MAM domains lie at 71–229 (ERCD…GCLP) and 268–427 (QACG…ACGQ). One can recognise an LDL-receptor class A 2 domain in the interval 433–471 (LCSADEFPCTSGQCIAKESVCDSRQDCSDESDEDPATCS). Disulfide bonds link Cys434–Cys446, Cys441–Cys459, and Cys453–Cys470. MAM domains are found at residues 474–637 (LTCD…ECEI) and 652–816 (SKCD…NCTL). Asn813 carries an N-linked (GlcNAc...) asparagine glycan. In terms of domain architecture, LDL-receptor class A 3 spans 822–860 (SCEGLDHFWCRHTRACIEKLRLCDLVDDCGDRTDEVNCA). Intrachain disulfides connect Cys823/Cys837, Cys831/Cys850, and Cys844/Cys859. An MAM 5 domain is found at 863–1024 (LQCNFETGIC…DDLSFMDCTL (162 aa)). Asn1049 is a glycosylation site (N-linked (GlcNAc...) asparagine). The LDL-receptor class A 4 domain occupies 1049-1086 (NCTDNEFICRSDGHCIEKMQKCDFKYDCPDKSDEASCV). 3 cysteine pairs are disulfide-bonded: Cys1050–Cys1063, Cys1057–Cys1076, and Cys1070–Cys1085. An MAM 6 domain is found at 1088–1256 (EVCSFEKRSL…DDISFQDCSP (169 aa)). Asn1199 is a glycosylation site (N-linked (GlcNAc...) asparagine). Residues 1263-1301 (KCTDHEFMCANKHCIAKDKLCDFVNDCADNSDETTFICR) form the LDL-receptor class A 5 domain. 3 disulfide bridges follow: Cys1264–Cys1276, Cys1271–Cys1289, and Cys1283–Cys1300. Residues 1305 to 1465 (GRCDFEFDLC…DIVLTENCLS (161 aa)) form the MAM 7 domain. Asn1414 is a glycosylation site (N-linked (GlcNAc...) asparagine). In terms of domain architecture, LDL-receptor class A 6 spans 1482–1518 (FCPLGYRECHNGKCYRLEQSCNFVDNCGDNTDENECG). 3 disulfide bridges follow: Cys1483–Cys1495, Cys1490–Cys1508, and Cys1502–Cys1517. The MAM 8 domain maps to 1519–1676 (SSCTFEKGWC…DDIEFKNCTT (158 aa)). The LDL-receptor class A 7 domain occupies 1683-1720 (LCPEITDFLCRDKKCIASHLLCDYKPDCSDRSDEAHCA). 3 disulfides stabilise this stretch: Cys1684–Cys1697, Cys1692–Cys1710, and Cys1704–Cys1719. The MAM 9 domain occupies 1727–1892 (GSCNFETSSG…DISFTPECVT (166 aa)). LDL-receptor class A domains are found at residues 1902-1939 (PCEA…MDCP), 1946-1982 (LCSN…LICS), and 1985-2023 (SCSN…SSCS). Disulfide bonds link Cys1903–Cys1916, Cys1910–Cys1929, Cys1923–Cys1938, Cys1947–Cys1959, Cys1954–Cys1972, Cys1966–Cys1981, Cys1986–Cys1999, Cys1993–Cys2012, Cys2006–Cys2022, Cys2025–Cys2036, Cys2030–Cys2045, and Cys2047–Cys2056. The EGF-like domain occupies 2024-2057 (ECPLNYCRNGGTCVVEKNGPMCRCRQGWKGNRCH). The helical transmembrane segment at 2077–2097 (LLGIGLAFLMTHITVAVLCFL) threads the bilayer. Residues 2098–2156 (ANRKVPIRKTEGSGNCAFVNPVYGNWSNPEKTESSVYSFSNPLYGTTSGSLETLSHHLK) lie on the Cytoplasmic side of the membrane.

As to quaternary structure, interacts with FGF19. Strongly expressed in the small intestine.

It is found in the cytoplasmic vesicle membrane. Its function is as follows. Enhances production and/or transport of FGF19 and thus has a role in regulation of bile acid synthesis. The sequence is that of MAM and LDL-receptor class A domain-containing protein 1 from Homo sapiens (Human).